We begin with the raw amino-acid sequence, 539 residues long: Protein ENTREP2 (539 aa).

4 helical membrane-spanning segments follow: residues 31-51, 65-85, 89-109, and 176-196; these read IVLA…AVSF, SCPF…VVSW, LSLV…LNLA, and LLFS…LATA. The tract at residues 301–481 is disordered; sequence VVGQPPASQV…TSKERPRSLV (181 aa). Residues 306–331 show a composition bias toward polar residues; that stretch reads PASQVTSIGQQVAESSSGDPNTSAGF. Residues 347–365 are compositionally biased toward low complexity; the sequence is GTATPGSSPSPDGPVGAPA. Positions 395 to 408 are enriched in polar residues; the sequence is SRSTSDPTLCTSSM.

This sequence belongs to the ENTREP family.

The protein resides in the membrane. This is Protein ENTREP2 from Homo sapiens (Human).